Reading from the N-terminus, the 475-residue chain is Ankyrin repeat, SAM and basic leucine zipper domain-containing protein 1 (475 aa).

Positions 1-24 are disordered; that stretch reads MAAGPLRGLAVAGGGESSESEDDG. 3 positions are modified to phosphoserine: S17, S18, and S20. ANK repeat units lie at residues 45–74, 78–107, 110–144, 148–177, 181–210, and 214–243; these read ERQE…SVDT, YGWT…NASF, DKQT…DPNV, RLMT…EVNT, NGYT…NKMI, and DGKT…PLEG. The 63-residue stretch at 272-334 folds into the SAM domain; it reads SYTAFGDLEI…KIMAALKELE (63 aa).

In terms of assembly, interacts with DDX4, PIWIL1, RANBP9 and TDRD1.

The protein resides in the cytoplasm. In terms of biological role, plays a central role during spermatogenesis by repressing transposable elements and preventing their mobilization, which is essential for the germline integrity. Acts via the piRNA metabolic process, which mediates the repression of transposable elements during meiosis by forming complexes composed of piRNAs and Piwi proteins and governs the methylation and subsequent repression of transposons. Its association with pi-bodies suggests a participation in the primary piRNAs metabolic process. Required prior to the pachytene stage to facilitate the production of multiple types of piRNAs, including those associated with repeats involved in the regulation of retrotransposons. May act by mediating protein-protein interactions during germ cell maturation. The polypeptide is Ankyrin repeat, SAM and basic leucine zipper domain-containing protein 1 (ASZ1) (Ovis aries (Sheep)).